A 238-amino-acid polypeptide reads, in one-letter code: 1-(5-phosphoribosyl)-5-[(5-phosphoribosylamino)methylideneamino] imidazole-4-carboxamide isomerase (238 aa).

Catalysis depends on Asp8, which acts as the Proton acceptor. Asp129 acts as the Proton donor in catalysis.

This sequence belongs to the HisA/HisF family.

Its subcellular location is the cytoplasm. It carries out the reaction 1-(5-phospho-beta-D-ribosyl)-5-[(5-phospho-beta-D-ribosylamino)methylideneamino]imidazole-4-carboxamide = 5-[(5-phospho-1-deoxy-D-ribulos-1-ylimino)methylamino]-1-(5-phospho-beta-D-ribosyl)imidazole-4-carboxamide. It participates in amino-acid biosynthesis; L-histidine biosynthesis; L-histidine from 5-phospho-alpha-D-ribose 1-diphosphate: step 4/9. This Jannaschia sp. (strain CCS1) protein is 1-(5-phosphoribosyl)-5-[(5-phosphoribosylamino)methylideneamino] imidazole-4-carboxamide isomerase.